We begin with the raw amino-acid sequence, 196 residues long: Nitrogen regulatory protein P-II homolog (196 aa).

A chloroplast-targeting transit peptide spans 1–61 (MAASMTKPIS…NNSRVLPVVS (61 aa)). Residues 108–112 (GFGAQ) and 161–164 (GDGK) each bind ATP. Glycine 110 is a binding site for Mg(2+).

This sequence belongs to the P(II) protein family. Homodimer. Interacts with NAGK. Interaction with NAGK is dependent of MgATP and inhibited by 2-oxoglutarate, arginine, glutamate, citrate, and oxaloacetate.

It localises to the plastid. Its subcellular location is the chloroplast. Its function is as follows. Participates in sensing carbon and organic nitrogen status and regulates some steps of primary carbon and nitrogen metabolism. Required for nitrite uptake in chloroplasts and regulates arginine biosynthesis through interaction with acetylglutamate kinase (NAGK) in chloroplasts. Regulates fatty acids synthesis in chloroplasts by interacting with the acetyl-CoA carboxylase complex and inhibiting acetyl-CoA carboxylase (ACCase) activity. This Arabidopsis thaliana (Mouse-ear cress) protein is Nitrogen regulatory protein P-II homolog (GLB1).